Here is a 242-residue protein sequence, read N- to C-terminus: Glutamate transport ATP-binding protein GluA (242 aa).

Residues 2 to 236 (IKMTGVQKFF…PQTDRAKDFL (235 aa)) enclose the ABC transporter domain. 34–41 (GPSGSGKS) is a binding site for ATP.

This sequence belongs to the ABC transporter superfamily. As to quaternary structure, the complex is composed of two ATP-binding proteins (GluA), two transmembrane proteins (GluC and GluD) and a solute-binding protein (GluB).

The protein resides in the cell membrane. The enzyme catalyses a polar amino acid(out) + ATP + H2O = a polar amino acid(in) + ADP + phosphate + H(+). It catalyses the reaction L-glutamate(out) + ATP + H2O = L-glutamate(in) + ADP + phosphate + H(+). Functionally, part of the ABC transporter complex GluABCD involved in glutamate uptake. Probably responsible for energy coupling to the transport system. This chain is Glutamate transport ATP-binding protein GluA, found in Corynebacterium efficiens (strain DSM 44549 / YS-314 / AJ 12310 / JCM 11189 / NBRC 100395).